A 641-amino-acid chain; its full sequence is SUMO-activating enzyme subunit 2-A (641 aa).

Residues 24 to 29, aspartate 48, 56 to 59, lysine 72, 95 to 96, and 117 to 122 contribute to the ATP site; these read GAGGIG, NLNR, SI, and DNNAAR. Zn(2+) is bound by residues cysteine 158 and cysteine 161. The Glycyl thioester intermediate role is filled by cysteine 173. Zn(2+)-binding residues include cysteine 439 and cysteine 442. The segment at 546-641 is disordered; that stretch reads GDVPEKGPQK…EEDDDIIALD (96 aa). Basic and acidic residues predominate over residues 548–561; sequence VPEKGPQKPPEESV. Over residues 562-579 the composition is skewed to polar residues; it reads KNITNGSDDGAQPSTSKA. 2 stretches are compositionally biased toward acidic residues: residues 582 to 594 and 630 to 641; these read QDDV…DEES and PVEEDDDIIALD.

The protein belongs to the ubiquitin-activating E1 family. As to quaternary structure, heterodimer of sae1 and uba2/sae2. The heterodimer corresponds to the two domains that are encoded on a single polypeptide chain in ubiquitin-activating enzyme E1. Interacts with ube2i.

It is found in the nucleus. It functions in the pathway protein modification; protein sumoylation. In terms of biological role, the heterodimer acts as an E1 ligase for sumo1, sumo2, and sumo3. It mediates ATP-dependent activation of sumo proteins followed by formation of a thioester bond between a sumo protein and a conserved active site cysteine residue on uba2/sae2. The protein is SUMO-activating enzyme subunit 2-A (uba2-a) of Xenopus laevis (African clawed frog).